The chain runs to 95 residues: Aspartyl/glutamyl-tRNA(Asn/Gln) amidotransferase subunit C (95 aa).

The protein belongs to the GatC family. Heterotrimer of A, B and C subunits.

The enzyme catalyses L-glutamyl-tRNA(Gln) + L-glutamine + ATP + H2O = L-glutaminyl-tRNA(Gln) + L-glutamate + ADP + phosphate + H(+). The catalysed reaction is L-aspartyl-tRNA(Asn) + L-glutamine + ATP + H2O = L-asparaginyl-tRNA(Asn) + L-glutamate + ADP + phosphate + 2 H(+). Allows the formation of correctly charged Asn-tRNA(Asn) or Gln-tRNA(Gln) through the transamidation of misacylated Asp-tRNA(Asn) or Glu-tRNA(Gln) in organisms which lack either or both of asparaginyl-tRNA or glutaminyl-tRNA synthetases. The reaction takes place in the presence of glutamine and ATP through an activated phospho-Asp-tRNA(Asn) or phospho-Glu-tRNA(Gln). The chain is Aspartyl/glutamyl-tRNA(Asn/Gln) amidotransferase subunit C from Marinobacter nauticus (strain ATCC 700491 / DSM 11845 / VT8) (Marinobacter aquaeolei).